Here is a 109-residue protein sequence, read N- to C-terminus: METTAIIRGVHISAQKTRLVADLIRGKSVAQALNILTFSPKKAAGILKKAVESAIANAEHNDGADIDELKITTIFVDKAQSMKRFSARAKGRGNRIEKQTCHITVKVGA.

This sequence belongs to the universal ribosomal protein uL22 family. In terms of assembly, part of the 50S ribosomal subunit.

In terms of biological role, this protein binds specifically to 23S rRNA; its binding is stimulated by other ribosomal proteins, e.g. L4, L17, and L20. It is important during the early stages of 50S assembly. It makes multiple contacts with different domains of the 23S rRNA in the assembled 50S subunit and ribosome. The globular domain of the protein is located near the polypeptide exit tunnel on the outside of the subunit, while an extended beta-hairpin is found that lines the wall of the exit tunnel in the center of the 70S ribosome. In Bordetella petrii (strain ATCC BAA-461 / DSM 12804 / CCUG 43448), this protein is Large ribosomal subunit protein uL22.